A 173-amino-acid chain; its full sequence is Small ribosomal subunit protein uS13 (173 aa).

Residues 130–143 (GVRHKRGQKVRGQR) are compositionally biased toward basic residues. The segment at 130–155 (GVRHKRGQKVRGQRTKSTGRTEGTIG) is disordered.

It belongs to the universal ribosomal protein uS13 family. As to quaternary structure, part of the 30S ribosomal subunit. Forms a loose heterodimer with protein S19. Forms two bridges to the 50S subunit in the 70S ribosome.

In terms of biological role, located at the top of the head of the 30S subunit, it contacts several helices of the 16S rRNA. In the 70S ribosome it contacts the 23S rRNA (bridge B1a) and protein L5 of the 50S subunit (bridge B1b), connecting the 2 subunits; these bridges are implicated in subunit movement. The sequence is that of Small ribosomal subunit protein uS13 from Haloquadratum walsbyi (strain DSM 16790 / HBSQ001).